A 451-amino-acid chain; its full sequence is uncharacterized protein (451 aa).

Positions 1-59 (MLKKNDIVEVEISDLSHDGAGIAKVDGLVFFVDNALPTEKIRMRVLKVKKNIAFGKVES) constitute a TRAM domain. S-adenosyl-L-methionine contacts are provided by Gln-283, Tyr-312, Glu-333, and Asp-381. The Nucleophile role is filled by Cys-408.

Belongs to the class I-like SAM-binding methyltransferase superfamily. RNA M5U methyltransferase family.

This is an uncharacterized protein from Streptococcus mutans serotype c (strain ATCC 700610 / UA159).